The chain runs to 506 residues: ATP synthase subunit alpha (506 aa).

An ATP-binding site is contributed by 170–177; the sequence is GDRQTGKT.

It belongs to the ATPase alpha/beta chains family. As to quaternary structure, F-type ATPases have 2 components, CF(1) - the catalytic core - and CF(0) - the membrane proton channel. CF(1) has five subunits: alpha(3), beta(3), gamma(1), delta(1), epsilon(1). CF(0) has four main subunits: a(1), b(1), b'(1) and c(9-12).

The protein localises to the cellular thylakoid membrane. It catalyses the reaction ATP + H2O + 4 H(+)(in) = ADP + phosphate + 5 H(+)(out). Produces ATP from ADP in the presence of a proton gradient across the membrane. The alpha chain is a regulatory subunit. In Synechococcus sp. (strain JA-2-3B'a(2-13)) (Cyanobacteria bacterium Yellowstone B-Prime), this protein is ATP synthase subunit alpha.